A 123-amino-acid polypeptide reads, in one-letter code: Histone H2B.3 (123 aa).

Residues 1–30 (MPPKVSGKAAKKAGKAQKNISKGDKKKNRK) are disordered. O-linked (GlcNAc) serine glycosylation occurs at Ser-110. Lys-118 is covalently cross-linked (Glycyl lysine isopeptide (Lys-Gly) (interchain with G-Cter in ubiquitin)).

This sequence belongs to the histone H2B family. In terms of assembly, the nucleosome is a histone octamer containing two molecules each of H2A, H2B, H3 and H4 assembled in one H3-H4 heterotetramer and two H2A-H2B heterodimers. The octamer wraps approximately 147 bp of DNA. In terms of processing, monoubiquitination of Lys-118 gives a specific tag for epigenetic transcriptional activation and is also prerequisite for histone H3 'Lys-4' and 'Lys-79' methylation. Post-translationally, glcNAcylation at Ser-110 promotes monoubiquitination of Lys-118. It fluctuates in response to extracellular glucose, and associates with transcribed genes.

It localises to the nucleus. The protein resides in the chromosome. In terms of biological role, core component of nucleosome. Nucleosomes wrap and compact DNA into chromatin, limiting DNA accessibility to the cellular machineries which require DNA as a template. Histones thereby play a central role in transcription regulation, DNA repair, DNA replication and chromosomal stability. DNA accessibility is regulated via a complex set of post-translational modifications of histones, also called histone code, and nucleosome remodeling. The sequence is that of Histone H2B.3 from Tigriopus californicus (Marine copepod).